We begin with the raw amino-acid sequence, 297 residues long: Formamidopyrimidine-DNA glycosylase (297 aa).

The Schiff-base intermediate with DNA role is filled by Pro-2. Glu-3 (proton donor) is an active-site residue. Lys-58 (proton donor; for beta-elimination activity) is an active-site residue. His-106, Arg-125, and Arg-168 together coordinate DNA. The segment at 259–295 (RVYDREGLACTARGCRGRVRRIVQAGRSTFYCETCQP) adopts an FPG-type zinc-finger fold. The active-site Proton donor; for delta-elimination activity is Arg-285.

Belongs to the FPG family. In terms of assembly, monomer. The cofactor is Zn(2+).

It catalyses the reaction Hydrolysis of DNA containing ring-opened 7-methylguanine residues, releasing 2,6-diamino-4-hydroxy-5-(N-methyl)formamidopyrimidine.. The catalysed reaction is 2'-deoxyribonucleotide-(2'-deoxyribose 5'-phosphate)-2'-deoxyribonucleotide-DNA = a 3'-end 2'-deoxyribonucleotide-(2,3-dehydro-2,3-deoxyribose 5'-phosphate)-DNA + a 5'-end 5'-phospho-2'-deoxyribonucleoside-DNA + H(+). Functionally, involved in base excision repair of DNA damaged by oxidation or by mutagenic agents. Acts as a DNA glycosylase that recognizes and removes damaged bases. Has a preference for oxidized purines, such as 7,8-dihydro-8-oxoguanine (8-oxoG). Has AP (apurinic/apyrimidinic) lyase activity and introduces nicks in the DNA strand. Cleaves the DNA backbone by beta-delta elimination to generate a single-strand break at the site of the removed base with both 3'- and 5'-phosphates. In Methylobacterium sp. (strain 4-46), this protein is Formamidopyrimidine-DNA glycosylase.